Consider the following 445-residue polypeptide: Arabinooligosaccharide-binding protein (445 aa).

Residues 1–20 (MGKNILFFSFVGVMVLVLVA) form the signal peptide. A lipid anchor (N-palmitoyl cysteine) is attached at C21. Residue C21 is the site of S-diacylglycerol cysteine attachment.

This sequence belongs to the bacterial solute-binding protein 1 family. The complex is composed of two ATP-binding proteins (MsmX), two transmembrane proteins (AraP and AraQ) and a solute-binding protein (AraN).

Its subcellular location is the cell membrane. Functionally, part of the ABC transporter complex AraNPQ involved in the uptake of arabinooligosaccharides. AraN captures the substrate and delivers it to the two transmembrane components. The polypeptide is Arabinooligosaccharide-binding protein (araN) (Halalkalibacterium halodurans (strain ATCC BAA-125 / DSM 18197 / FERM 7344 / JCM 9153 / C-125) (Bacillus halodurans)).